The chain runs to 550 residues: Glucose-6-phosphate isomerase (550 aa).

E356 (proton donor) is an active-site residue. Catalysis depends on residues H387 and K515.

This sequence belongs to the GPI family.

The protein localises to the cytoplasm. The enzyme catalyses alpha-D-glucose 6-phosphate = beta-D-fructose 6-phosphate. It participates in carbohydrate biosynthesis; gluconeogenesis. The protein operates within carbohydrate degradation; glycolysis; D-glyceraldehyde 3-phosphate and glycerone phosphate from D-glucose: step 2/4. In terms of biological role, catalyzes the reversible isomerization of glucose-6-phosphate to fructose-6-phosphate. The polypeptide is Glucose-6-phosphate isomerase (Vibrio parahaemolyticus serotype O3:K6 (strain RIMD 2210633)).